Here is a 124-residue protein sequence, read N- to C-terminus: Small ribosomal subunit protein eS6 (124 aa).

Belongs to the eukaryotic ribosomal protein eS6 family.

The polypeptide is Small ribosomal subunit protein eS6 (Methanococcus maripaludis (strain C7 / ATCC BAA-1331)).